Consider the following 692-residue polypeptide: Elongation factor G (692 aa).

A tr-type G domain is found at 8–282 (EKTRNIGIMA…AVIDYLPSPL (275 aa)). Residues 17–24 (AHVDAGKT), 81–85 (DTPGH), and 135–138 (NKMD) each bind GTP.

The protein belongs to the TRAFAC class translation factor GTPase superfamily. Classic translation factor GTPase family. EF-G/EF-2 subfamily.

It localises to the cytoplasm. Catalyzes the GTP-dependent ribosomal translocation step during translation elongation. During this step, the ribosome changes from the pre-translocational (PRE) to the post-translocational (POST) state as the newly formed A-site-bound peptidyl-tRNA and P-site-bound deacylated tRNA move to the P and E sites, respectively. Catalyzes the coordinated movement of the two tRNA molecules, the mRNA and conformational changes in the ribosome. The polypeptide is Elongation factor G (Streptococcus agalactiae serotype Ia (strain ATCC 27591 / A909 / CDC SS700)).